Here is a 453-residue protein sequence, read N- to C-terminus: tRNA modification GTPase MnmE (453 aa).

3 residues coordinate (6S)-5-formyl-5,6,7,8-tetrahydrofolate: arginine 22, glutamate 79, and lysine 119. Residues 215–376 (GMKVVIAGRP…LKQHLKSLMG (162 aa)) enclose the TrmE-type G domain. Residue asparagine 225 coordinates K(+). GTP contacts are provided by residues 225–230 (NAGKSS), 244–250 (TEIAGTT), 269–272 (DTAG), and 334–337 (NKAD). Mg(2+) is bound at residue serine 229. K(+)-binding residues include threonine 244, isoleucine 246, and threonine 249. A Mg(2+)-binding site is contributed by threonine 250. Lysine 453 contributes to the (6S)-5-formyl-5,6,7,8-tetrahydrofolate binding site.

It belongs to the TRAFAC class TrmE-Era-EngA-EngB-Septin-like GTPase superfamily. TrmE GTPase family. In terms of assembly, homodimer. Heterotetramer of two MnmE and two MnmG subunits. It depends on K(+) as a cofactor.

It localises to the cytoplasm. Exhibits a very high intrinsic GTPase hydrolysis rate. Involved in the addition of a carboxymethylaminomethyl (cmnm) group at the wobble position (U34) of certain tRNAs, forming tRNA-cmnm(5)s(2)U34. This Shewanella frigidimarina (strain NCIMB 400) protein is tRNA modification GTPase MnmE.